Reading from the N-terminus, the 508-residue chain is MEEYQVHLELDRSRQQDFLYPLIFREYIYGLAYGHDLNSSILVENGGYDNKSSLLIVKRLITRMYQQNHFLFSANDSNKNPFWGYNKNLYSQIISEGFAVVVEIPLSLQLSSSLEEAEIVKSYNNLRSIHSIFPFFEDKFTYLNYVSDVRIPYPIHLEILVQTLRYWVKDAPFFHLVRLFLYEYCNWNSLITPKKSISTFSKSNPRFLLFLYNFYVYEYESIFLFLRNKSSHLRLPSFSVLFERIYFYAKIEHQHLVEVFAKDFSSTLLFFKDPFIHYVRYQGKSILASKNAPFLMNKWKYYFILLWQCHFYVWSQPGAIHITQLSEHSFDFLGYFSNVRLNASVVRSQMLENSFIIEILMKKLDTIVPIILLIRSLAKAKFCNVLGHPISKPVWSDSSDFDIIDRFLRICRNLSHYYNGSSKKKSLYRIKYILRLSCIKTLARKHKSTVRAFLKGLGSEELLEEFFTEEEEILSLIFPRVSSTLQRLYRGRIWYLDIIFINDLVNRE.

Belongs to the intron maturase 2 family. MatK subfamily.

It localises to the plastid. The protein localises to the chloroplast. Functionally, usually encoded in the trnK tRNA gene intron. Probably assists in splicing its own and other chloroplast group II introns. The polypeptide is Maturase K (Amburana cearensis (Cerejeira)).